A 235-amino-acid polypeptide reads, in one-letter code: tRNA (guanine-N(1)-)-methyltransferase (235 aa).

Residues G113 and 133-138 each bind S-adenosyl-L-methionine; that span reads IGDYIL.

Belongs to the RNA methyltransferase TrmD family. In terms of assembly, homodimer.

It is found in the cytoplasm. It catalyses the reaction guanosine(37) in tRNA + S-adenosyl-L-methionine = N(1)-methylguanosine(37) in tRNA + S-adenosyl-L-homocysteine + H(+). Specifically methylates guanosine-37 in various tRNAs. In Wolbachia sp. subsp. Brugia malayi (strain TRS), this protein is tRNA (guanine-N(1)-)-methyltransferase.